Consider the following 2575-residue polypeptide: Non-reducing polyketide synthase pks11 (2575 aa).

Residues 89–228 (LANIILSPLV…ASKTVSTLQG (140 aa)) enclose the Starter acyltransferase (SAT) domain. C129 (nucleophile; for transacylase activity) is an active-site residue. The Proton donor/acceptor; for transacylase activity role is filled by H247. The region spanning 373–790 (EDDIAVVGMS…GSNASAVVTE (418 aa)) is the Ketosynthase family 3 (KS3) domain. Residues C538, H673, and H713 each act as for beta-ketoacyl synthase activity in the active site. The Malonyl-CoA:ACP transacylase (MAT) domain maps to 901–1192 (FGGQISTYVG…TNMASRALGS (292 aa)). The tract at residues 1276-1409 (PKGLWSFIDY…GQIIFVSTDN (134 aa)) is N-terminal hotdog fold. The PKS/mFAS DH domain maps to 1276–1586 (PKGLWSFIDY…YHKVAKATMS (311 aa)). The interval 1307-1584 (LVSGHIIAQT…VNYHKVAKAT (278 aa)) is product template (PT) domain. The active-site Proton acceptor; for dehydratase activity is H1311. Residues 1437 to 1586 (ADDIIQGRNI…YHKVAKATMS (150 aa)) form a C-terminal hotdog fold region. The active-site Proton donor; for dehydratase activity is the D1493. The segment covering 1597-1606 (TTSTSTNVKS) has biased composition (polar residues). The interval 1597-1636 (TTSTSTNVKSSPAAAEGSSPVENGASGSGSKAKKTKSGAG) is disordered. The Carrier domain maps to 1637 to 1711 (QDVVNKTKGL…GLVQIIKSTL (75 aa)). Residue S1671 is modified to O-(pantetheine 4'-phosphoryl)serine. A disordered region spans residues 1713–1762 (VSDDEEGSDQEGSEASSSESSTTFTPSTTATTVSDVEDNGNEKSIGKEKS). The span at 1714-1724 (SDDEEGSDQEG) shows a compositional bias: acidic residues. Positions 1725-1746 (SEASSSESSTTFTPSTTATTVS) are enriched in low complexity. The span at 1752 to 1762 (GNEKSIGKEKS) shows a compositional bias: basic and acidic residues. The segment at 1835 to 2130 (LTRIPHDPQH…HIDWTDGNSP (296 aa)) is methyltransferase domain. The 245-residue stretch at 2204 to 2448 (ITGATGSLGS…LCWTPVDDVA (245 aa)) folds into the Thioester reductase (TE) domain.

Requires pantetheine 4'-phosphate as cofactor.

It participates in secondary metabolite biosynthesis. In terms of biological role, non-reducing polyketide synthase; part of the gene cluster that mediates the biosynthesis of mitorubrinol and mitorubrinic acid, two virulence factors that improve T.marneffei intracellular survival in macrophages. The two polyketide synthases pks12 and pks11 are probably responsible for sequential use in the biosynthesis of mitorubrinol and mitorubrinic acid. The first part of the biosynthesis is probably catalyzed by pks12, which synthesized orsellinic acid. This tetraketide is then used as a starter unit for pks11, which possesses a SAT domain, in the second part of the biosynthesis. Pks11, contains a methyltransferase domain, also served that methylates the products, using a methyl group from S-adenosylmethionine. The sequence is that of Non-reducing polyketide synthase pks11 from Talaromyces marneffei (Penicillium marneffei).